The sequence spans 507 residues: Efflux pump ustT (507 aa).

11 helical membrane passes run 59–79 (IAVV…IIVA), 146–166 (LLIA…VTWF), 180–200 (IWQL…AMIA), 216–236 (HAAV…LANF), 240–260 (IPVF…YVVV), 316–336 (VLLI…SGIT), 359–379 (AGVN…ILVK), 398–418 (VCLI…TLVF), 421–441 (TVFA…TGMV), 449–469 (VFTG…PMLA), and 481–501 (IWVG…LGAI).

This sequence belongs to the major facilitator superfamily.

The protein localises to the cell membrane. Its pathway is mycotoxin biosynthesis. Functionally, efflux pump; part of the gene cluster that mediates the biosynthesis of the secondary metabolite ustiloxin B, an antimitotic tetrapeptide. Probably involved in self-resistance through the export of ustiloxin B. In Aspergillus flavus (strain ATCC 200026 / FGSC A1120 / IAM 13836 / NRRL 3357 / JCM 12722 / SRRC 167), this protein is Efflux pump ustT.